A 323-amino-acid chain; its full sequence is MSSLPPAIFLMGPTAAGKTDLAMALADALPCELISVDSALIYRGMDIGTAKPSRELLARYPHRLIDIRDPAESYSAAEFRADALAAMAEATARGRIPLLVGGTMLYYKALLEGLADMPGADPEVRAAIEAEALAEGWEALHRQLAEVDPESAARIHPNDPQRLMRALEVYRLGGVSMSDLRRRQSAEKADFDASGRNQLPYTVAQLAIAPEQRQVLHARIAQRFRQMLEQGFIAEVEALHARSDLHAGLPSIRAVGYRQVWDYLDGKLSYAEMTERGIIATRQLAKRQFTWLRSWSHLHWMDSLAGDNLPRALKYLKTVSILA.

ATP is bound at residue 12–19 (GPTAAGKT). 14–19 (TAAGKT) lines the substrate pocket. Interaction with substrate tRNA regions lie at residues 37-40 (DSAL) and 161-165 (QRLMR).

It belongs to the IPP transferase family. In terms of assembly, monomer. Requires Mg(2+) as cofactor.

The catalysed reaction is adenosine(37) in tRNA + dimethylallyl diphosphate = N(6)-dimethylallyladenosine(37) in tRNA + diphosphate. In terms of biological role, catalyzes the transfer of a dimethylallyl group onto the adenine at position 37 in tRNAs that read codons beginning with uridine, leading to the formation of N6-(dimethylallyl)adenosine (i(6)A). In Pseudomonas aeruginosa (strain UCBPP-PA14), this protein is tRNA dimethylallyltransferase.